The chain runs to 106 residues: RNA-binding protein Hfq (106 aa).

Positions 9-68 (DPYLNALRKERVPVSIYLVNGIKLQGQIESFDAFVILLRNNISQMVYKHAVSTIVPSRNI) constitute a Sm domain. The disordered stretch occupies residues 78–106 (EDEAGEEISAEYTPNAEGQAEATADPLYD).

Belongs to the Hfq family. Homohexamer.

In terms of biological role, RNA chaperone that binds small regulatory RNA (sRNAs) and mRNAs to facilitate mRNA translational regulation in response to envelope stress, environmental stress and changes in metabolite concentrations. Also binds with high specificity to tRNAs. The protein is RNA-binding protein Hfq of Dichelobacter nodosus (strain VCS1703A).